We begin with the raw amino-acid sequence, 142 residues long: Large ribosomal subunit protein uL11 (142 aa).

Belongs to the universal ribosomal protein uL11 family. As to quaternary structure, part of the ribosomal stalk of the 50S ribosomal subunit. Interacts with L10 and the large rRNA to form the base of the stalk. L10 forms an elongated spine to which L12 dimers bind in a sequential fashion forming a multimeric L10(L12)X complex. One or more lysine residues are methylated.

Forms part of the ribosomal stalk which helps the ribosome interact with GTP-bound translation factors. This Citrobacter koseri (strain ATCC BAA-895 / CDC 4225-83 / SGSC4696) protein is Large ribosomal subunit protein uL11.